The primary structure comprises 284 residues: MTEIIDGKALAQKLQLHLANKVEQMKEKHGLVPGLVVILVGDNPASQVYVRNKERSAIKAGFKSETICLSDSISEEELIEIIEGYNQDPSFHGILVQLPLPAHINDKKIILAIDPHKDVDGFHPMNTGHLWSGRSMMVPCTPAGIMEMLSAYHVDLEGKHAVIIGRSNIVGKPMAQLLLEKNATVTLTHSRTKHLSEVTRCADVLIVAIGQGNFVTEEFVKEGAVVIDVGMNRDKNGKLIGDVNFDHVAQKASLITPVPGGVGPMTITMLLEQTYQAALRSVTK.

Residues glycine 165–serine 167 and serine 190 each bind NADP(+).

It belongs to the tetrahydrofolate dehydrogenase/cyclohydrolase family. In terms of assembly, homodimer.

It carries out the reaction (6R)-5,10-methylene-5,6,7,8-tetrahydrofolate + NADP(+) = (6R)-5,10-methenyltetrahydrofolate + NADPH. It catalyses the reaction (6R)-5,10-methenyltetrahydrofolate + H2O = (6R)-10-formyltetrahydrofolate + H(+). Its pathway is one-carbon metabolism; tetrahydrofolate interconversion. In terms of biological role, catalyzes the oxidation of 5,10-methylenetetrahydrofolate to 5,10-methenyltetrahydrofolate and then the hydrolysis of 5,10-methenyltetrahydrofolate to 10-formyltetrahydrofolate. The polypeptide is Bifunctional protein FolD (Streptococcus mutans serotype c (strain ATCC 700610 / UA159)).